Reading from the N-terminus, the 187-residue chain is Cell division protein SepF (187 aa).

The segment at 13–74 (GLAEDDRYAE…PAPATTAQVT (62 aa)) is disordered. The segment covering 16-65 (EDDRYAEDTEPETTRPRVEAAREVRVESRHEARPEVRHEPRPEVSVERRP) has biased composition (basic and acidic residues).

Belongs to the SepF family. Homodimer. Interacts with FtsZ.

Its subcellular location is the cytoplasm. Functionally, cell division protein that is part of the divisome complex and is recruited early to the Z-ring. Probably stimulates Z-ring formation, perhaps through the cross-linking of FtsZ protofilaments. Its function overlaps with FtsA. The sequence is that of Cell division protein SepF from Kineococcus radiotolerans (strain ATCC BAA-149 / DSM 14245 / SRS30216).